A 529-amino-acid polypeptide reads, in one-letter code: UDP-glucuronosyltransferase 2B33 (529 aa).

A signal peptide spans 1-24; it reads MSVKWTSIILLIQLSFYFSSGSCG. Residues Asn67 and Asn68 are each glycosylated (N-linked (GlcNAc...) asparagine). A helical membrane pass occupies residues 494 to 514; the sequence is IGFLLACVATVIFIIMKCCLF.

Belongs to the UDP-glycosyltransferase family.

The protein localises to the microsome membrane. It localises to the endoplasmic reticulum membrane. The catalysed reaction is glucuronate acceptor + UDP-alpha-D-glucuronate = acceptor beta-D-glucuronoside + UDP + H(+). Functionally, UDPGTs are of major importance in the conjugation and subsequent elimination of potentially toxic xenobiotics and endogenous compounds. This isozyme has glucuronidating capacity on estriol and does not catalyze the glucuronidation of beta-estradiol. Capable of conjugating 4-hydroxyestrone, androsterone, diclofenac, and hyodeoxycholic acid. This Macaca mulatta (Rhesus macaque) protein is UDP-glucuronosyltransferase 2B33 (UGT2B33).